Reading from the N-terminus, the 344-residue chain is MTADISLRPADHPAIKSGKIGVLLVNLGTPDGTDYTSMRRYLKEFLTDRRVIEWSPWKWYPILFGIVLNTRPQKVGKAYELIWNKEKNESYLRTYTRNQAELMAKRLHDLANVKVDWAMRYGTPSIASRIETLKQEGCDRILLFPLYPQYAAATTATVNDKAFQKLLSMRWQPALRTVPDYHDDETYIEALAQSVERHLSSLDWKPDMLLASFHGIPMSYFKQGDPYYCQCQKTGRLLRERLGLTQENFMVTFQSRFGPEEWLQPYTDKTVEKLAQDGVKRIAVINPGFVSDCLETLEEIAEQAAHSFHENGGDKFTHIPCLNDSDDGMKVLEKVVRRELQGWV.

His-214 and Glu-295 together coordinate Fe cation.

The protein belongs to the ferrochelatase family.

The protein localises to the cytoplasm. The catalysed reaction is heme b + 2 H(+) = protoporphyrin IX + Fe(2+). It participates in porphyrin-containing compound metabolism; protoheme biosynthesis; protoheme from protoporphyrin-IX: step 1/1. In terms of biological role, catalyzes the ferrous insertion into protoporphyrin IX. In Rhizobium etli (strain ATCC 51251 / DSM 11541 / JCM 21823 / NBRC 15573 / CFN 42), this protein is Ferrochelatase.